The chain runs to 366 residues: Mitochondrial carrier protein MTM1 (366 aa).

Solcar repeat units lie at residues 14 to 149 (ERML…IRDV), 156 to 250 (YPTL…CKER), and 266 to 359 (VHFI…SKKV). A run of 6 helical transmembrane segments spans residues 17 to 36 (LSAGAGSVLTSLILTPMDVV), 126 to 146 (SLTLLMAIPANMVYFSGYEYI), 162 to 182 (LFCGAIARVFAATSIAPLELV), 229 to 249 (TLWRDVPFSAIYWSSYELCKE), 268 to 286 (FINSFASGCISGMIAAICT), and 331 to 352 (LYTGLAARVIKIRPSCAIMISS).

Belongs to the mitochondrial carrier (TC 2.A.29) family.

The protein resides in the mitochondrion inner membrane. Functionally, involved in the mitochondrial activation of SOD2 by specifically facilitating insertion of the essential manganese cofactor. Has the ability to activate iron regulon in an iron-dependent manner. Responds to calorie restriction (CR) strength. The sequence is that of Mitochondrial carrier protein MTM1 (MTM1) from Saccharomyces cerevisiae (strain ATCC 204508 / S288c) (Baker's yeast).